A 194-amino-acid chain; its full sequence is dCTP deaminase (194 aa).

Residues 110 to 115, Asp-128, 136 to 138, Tyr-171, Lys-178, and Gln-182 contribute to the dCTP site; these read RSSLAR and VLE. Glu-138 (proton donor/acceptor) is an active-site residue.

Belongs to the dCTP deaminase family. Homotrimer.

The catalysed reaction is dCTP + H2O + H(+) = dUTP + NH4(+). It participates in pyrimidine metabolism; dUMP biosynthesis; dUMP from dCTP (dUTP route): step 1/2. In terms of biological role, catalyzes the deamination of dCTP to dUTP. In Glaesserella parasuis serovar 5 (strain SH0165) (Haemophilus parasuis), this protein is dCTP deaminase.